Reading from the N-terminus, the 537-residue chain is CTP synthase (537 aa).

The tract at residues 1-265 (MVHFIFVTGG…DNKVLKFFNI (265 aa)) is amidoligase domain. CTP is bound at residue Ser13. Residue Ser13 participates in UTP binding. Residues 14-19 (SLGKGL) and Asp71 each bind ATP. 2 residues coordinate Mg(2+): Asp71 and Glu139. Residues 146-148 (DIE) and Lys222 each bind CTP. Lys222 is a UTP binding site. The Glutamine amidotransferase type-1 domain occupies 290–536 (RIAIIAKYHK…IKAAIEYNKC (247 aa)). Gly352 provides a ligand contact to L-glutamine. Cys379 serves as the catalytic Nucleophile; for glutamine hydrolysis. L-glutamine is bound by residues 380-383 (FGMQ), Glu403, and Arg464. Active-site residues include His509 and Glu511.

This sequence belongs to the CTP synthase family. As to quaternary structure, homotetramer.

The catalysed reaction is UTP + L-glutamine + ATP + H2O = CTP + L-glutamate + ADP + phosphate + 2 H(+). The enzyme catalyses L-glutamine + H2O = L-glutamate + NH4(+). It carries out the reaction UTP + NH4(+) + ATP = CTP + ADP + phosphate + 2 H(+). It functions in the pathway pyrimidine metabolism; CTP biosynthesis via de novo pathway; CTP from UDP: step 2/2. With respect to regulation, allosterically activated by GTP, when glutamine is the substrate; GTP has no effect on the reaction when ammonia is the substrate. The allosteric effector GTP functions by stabilizing the protein conformation that binds the tetrahedral intermediate(s) formed during glutamine hydrolysis. Inhibited by the product CTP, via allosteric rather than competitive inhibition. Functionally, catalyzes the ATP-dependent amination of UTP to CTP with either L-glutamine or ammonia as the source of nitrogen. Regulates intracellular CTP levels through interactions with the four ribonucleotide triphosphates. The chain is CTP synthase from Rickettsia peacockii (strain Rustic).